Consider the following 54-residue polypeptide: uncharacterized protein (54 aa).

The helical transmembrane segment at Leu32 to Ile52 threads the bilayer.

It localises to the host membrane. This is an uncharacterized protein from Cassava vein mosaic virus (CsVMV).